The following is a 316-amino-acid chain: L-lactate dehydrogenase (316 aa).

NAD(+) is bound by residues Val15, Asp37, Lys42, Tyr68, and 82-83 (GL). Substrate contacts are provided by residues Gln85, Arg91, and 123–126 (NPVD). NAD(+) contacts are provided by residues 121–123 (ASN) and Thr146. 151–154 (DTSR) contacts substrate. Arg156 and His171 together coordinate beta-D-fructose 1,6-bisphosphate. Residue His178 is the Proton acceptor of the active site. Tyr222 carries the phosphotyrosine modification. Thr231 is a binding site for substrate.

The protein belongs to the LDH/MDH superfamily. LDH family. Homotetramer.

It localises to the cytoplasm. It carries out the reaction (S)-lactate + NAD(+) = pyruvate + NADH + H(+). It functions in the pathway fermentation; pyruvate fermentation to lactate; (S)-lactate from pyruvate: step 1/1. Its activity is regulated as follows. Allosterically activated by fructose 1,6-bisphosphate (FBP). Its function is as follows. Catalyzes the conversion of lactate to pyruvate. In Borreliella afzelii (strain PKo) (Borrelia afzelii), this protein is L-lactate dehydrogenase.